The chain runs to 396 residues: 3-amino-4-hydroxybenzoate 2-monooxygenase PtmB3 (396 aa).

FAD-binding positions include A19, 38-39 (EQ), and R112. Residue Y217 is the Proton acceptor of the active site. FAD is bound at residue D295. A disordered region spans residues 352–371 (RERGHEFHLPDGPQQRLRDR).

Belongs to the 6-hydroxynicotinate 3-monooxygenase family. It depends on FAD as a cofactor.

It catalyses the reaction 3-amino-4-hydroxybenzoate + NADPH + O2 + H(+) = 3-amino-2,4-dihydroxybenzoate + NADP(+) + H2O. It participates in antibiotic biosynthesis. Functionally, part of a gene cluster involved in the biosynthesis of thioplatensimycin (thioPTM) and platensimycin (PTM), potent and selective inhibitors of bacterial and mammalian fatty acid synthases. Catalyzes the hydroxylation of 3-amino-4-hydroxybenzoate (3,4-AHBA) to 3-amino-2,4-dihydroxybenzoate (3,2,4-ADHBA). This chain is 3-amino-4-hydroxybenzoate 2-monooxygenase PtmB3, found in Streptomyces platensis.